The chain runs to 121 residues: Homeobox protein HD-6 (121 aa).

A DNA-binding region (homeobox) is located at residues P28–Y87.

Its subcellular location is the nucleus. The protein is Homeobox protein HD-6 (HD-6) of Encephalitozoon cuniculi (strain GB-M1) (Microsporidian parasite).